Reading from the N-terminus, the 174-residue chain is ATP synthase subunit b, organellar chromatophore (174 aa).

A helical membrane pass occupies residues 26-46; that stretch reads LINLIIVIGVLFTFLRGFLGE.

This sequence belongs to the ATPase B chain family. In terms of assembly, F-type ATPases have 2 components, F(1) - the catalytic core - and F(0) - the membrane proton channel. F(1) has five subunits: alpha(3), beta(3), gamma(1), delta(1), epsilon(1). F(0) has four main subunits: a(1), b(1), b'(1) and c(10-14). The alpha and beta chains form an alternating ring which encloses part of the gamma chain. F(1) is attached to F(0) by a central stalk formed by the gamma and epsilon chains, while a peripheral stalk is formed by the delta, b and b' chains.

The protein localises to the plastid. It localises to the organellar chromatophore thylakoid membrane. In terms of biological role, f(1)F(0) ATP synthase produces ATP from ADP in the presence of a proton or sodium gradient. F-type ATPases consist of two structural domains, F(1) containing the extramembraneous catalytic core and F(0) containing the membrane proton channel, linked together by a central stalk and a peripheral stalk. During catalysis, ATP synthesis in the catalytic domain of F(1) is coupled via a rotary mechanism of the central stalk subunits to proton translocation. Functionally, component of the F(0) channel, it forms part of the peripheral stalk, linking F(1) to F(0). The chain is ATP synthase subunit b, organellar chromatophore from Paulinella chromatophora.